The following is a 171-amino-acid chain: Mitochondrial import inner membrane translocase subunit Tim17-A (171 aa).

Residues Cys-9 and Cys-78 are joined by a disulfide bond. Transmembrane regions (helical) follow at residues 17–37 (CGGA…IKGF), 63–77 (GGSF…SMID), and 113–133 (VGSA…GILL). Residues 144 to 171 (GPQFAEDPSQLPSTQLPSSPFGDYRQYQ) form a disordered region. The segment covering 151-163 (PSQLPSTQLPSSP) has biased composition (low complexity).

This sequence belongs to the Tim17/Tim22/Tim23 family. In terms of assembly, component of the TIM23 complex at least composed of TIMM23, TIMM17 (TIMM17A or TIMM17B) and TIMM50. The complex interacts with the TIMM44 component of the PAM complex and with DNAJC15. Post-translationally, degraded by YMEL1 downstream of the integrated stress response (ISR).

It is found in the mitochondrion inner membrane. Functionally, essential component of the TIM23 complex, a complex that mediates the translocation of transit peptide-containing proteins across the mitochondrial inner membrane. This Homo sapiens (Human) protein is Mitochondrial import inner membrane translocase subunit Tim17-A (TIMM17A).